The sequence spans 501 residues: 2,3-bisphosphoglycerate-independent phosphoglycerate mutase (501 aa).

2 residues coordinate Mn(2+): Asp12 and Ser62. Ser62 functions as the Phosphoserine intermediate in the catalytic mechanism. Residues His121, 150–151 (RD), Arg182, Arg188, 253–256 (RSDR), and Lys322 each bind substrate. The Mn(2+) site is built by Asp389, His393, Asp430, His431, and His449.

Belongs to the BPG-independent phosphoglycerate mutase family. Monomer. Mn(2+) serves as cofactor.

It carries out the reaction (2R)-2-phosphoglycerate = (2R)-3-phosphoglycerate. The protein operates within carbohydrate degradation; glycolysis; pyruvate from D-glyceraldehyde 3-phosphate: step 3/5. In terms of biological role, catalyzes the interconversion of 2-phosphoglycerate and 3-phosphoglycerate. In Ehrlichia ruminantium (strain Gardel), this protein is 2,3-bisphosphoglycerate-independent phosphoglycerate mutase.